The chain runs to 524 residues: RNA-directed RNA polymerase (524 aa).

A RdRp catalytic domain is found at 220 to 340 (QSIAQIDFSS…NFETALCRQE (121 aa)).

The catalysed reaction is RNA(n) + a ribonucleoside 5'-triphosphate = RNA(n+1) + diphosphate. Functionally, RNA-dependent RNA polymerase which replicates the viral genome. The protein is RNA-directed RNA polymerase of Cryptosporidium parvum.